The sequence spans 714 residues: MDTVSAFKLEVRADKIAVITIDAPGEKMNTLKAEFGSQVRGLIRQLRDDKSVRGVVFISAKADNFIAGADINMIARCRSAQEAEALARQGQQIMAEIHGLSIPVIAAIHGACLGGGLELALACHGRICSDDEKTRLGLPEVQLGLLPGSGGTQRLPRLIGVSTALDMMLTGKQLRPRQALKAGLVDEVVPQAILLQAAVELALKGRPTSREVPVRERVLAGPLGRHLLFQFVGKQTQRKTQGNYPAVKRILQVVENGLAHGCSSGYAEEARAFGELAMSPQSQALRSIFFASTDLKKDPGAEAGPGSLRSVAVLGGGLMGGGIAYVTACKGGLPVRIKDIQPRGINHALKYSWDLLNKQVRQRRLRPVERDRQMALISGTTDYQGFAHRDVVIEAVFEDLALKQRMVSEVEQYGGPQTIFASNTSSLPIGDIAAHASRPGQVIGLHFFSPVEKMPLVEMIPHKGTDPQTIATVVQLAKRQGKTPIVVADKAGFYVNRILAPYINEAMRLLVEGEPIEVIDNALVKFGFPVGPIQLLDEVGIDTGTKIIPVLESAFGERFSPPANIIDAILKDDRKGRKNNRGFYLYETKGRKSKKRPDPAVYPLLGIGRPQSRLSAQQVAERCVMMMLNEAARCFDEQIIRSARDGDIGAVFGIGFPPFLGGPFRYMDTIGAGEVAAILQRLAAQFGPRFTPCDTLLRMAEQGTTFWPADERLT.

Residues 1–190 (MDTVSAFKLE…KAGLVDEVVP (190 aa)) form an enoyl-CoA hydratase region. Residues 306–714 (GSLRSVAVLG…TFWPADERLT (409 aa)) are 3-hydroxyacyl-CoA dehydrogenase.

This sequence in the N-terminal section; belongs to the enoyl-CoA hydratase/isomerase family. It in the central section; belongs to the 3-hydroxyacyl-CoA dehydrogenase family. As to quaternary structure, heterotetramer of two alpha chains (FadJ) and two beta chains (FadI).

It is found in the cytoplasm. The enzyme catalyses a (3S)-3-hydroxyacyl-CoA = a (2E)-enoyl-CoA + H2O. The catalysed reaction is a 4-saturated-(3S)-3-hydroxyacyl-CoA = a (3E)-enoyl-CoA + H2O. It carries out the reaction a (3S)-3-hydroxyacyl-CoA + NAD(+) = a 3-oxoacyl-CoA + NADH + H(+). It catalyses the reaction (3S)-3-hydroxybutanoyl-CoA = (3R)-3-hydroxybutanoyl-CoA. Its pathway is lipid metabolism; fatty acid beta-oxidation. Functionally, catalyzes the formation of a hydroxyacyl-CoA by addition of water on enoyl-CoA. Also exhibits 3-hydroxyacyl-CoA epimerase and 3-hydroxyacyl-CoA dehydrogenase activities. The sequence is that of Fatty acid oxidation complex subunit alpha from Klebsiella pneumoniae subsp. pneumoniae (strain ATCC 700721 / MGH 78578).